The following is a 156-amino-acid chain: Superoxide dismutase [Cu-Zn] 2 (156 aa).

Cu cation contacts are provided by H47, H49, and H64. A disulfide bridge connects residues C58 and C147. H64, H72, H81, and D84 together coordinate Zn(2+). Residue H121 participates in Cu cation binding.

This sequence belongs to the Cu-Zn superoxide dismutase family. As to quaternary structure, homodimer. The cofactor is Cu cation. It depends on Zn(2+) as a cofactor.

The protein resides in the cytoplasm. The catalysed reaction is 2 superoxide + 2 H(+) = H2O2 + O2. Its function is as follows. Destroys radicals which are normally produced within the cells and which are toxic to biological systems. In Mesembryanthemum crystallinum (Common ice plant), this protein is Superoxide dismutase [Cu-Zn] 2 (SODCC.2).